A 499-amino-acid chain; its full sequence is MMVAWWSLFLYGLQVAAPALAATPADWRSQSIYFLLTDRFARTDGSTTATCNTADRKYCGGTWQGIIDKLDYIQGMGFTAIWITPVTAQLPQTTAYGDAYHGYWQQDIYSLNENYGTADDLKALSSALHERGMYLMVDVVANHMGYDGAGSSVDYSVFKPFSSQDYFHPFCLIQNYEDQTQVEDCWLGDNTVSLPDLDTTKDVVKNEWYDWVGSLVSNYSIDGLRIDTVKHVQKDFWPGYNKAAGVYCIGEVLDGDPAYTCPYQNVMDGVLNYPIYYPLLNAFKSTSGSMDDLYNMINTVKSDCPDSTLLGTFVENHDNPRFASYTNDIALAKNVAAFIILNDGIPIIYAGQEQHYAGGNDPANREATWLSGYPTDSELYKLIASANAIRNYAISKDTGFVTYKNWPIYKDDTTIAMRKGTDGSQIVTILSNKGASGDSYTLSLSGAGYTAGQQLTEVIGCTTVTVGSDGNVPVPMAGGLPRVLYPTEKLAGSKICSSS.

Positions Met1–Ala21 are cleaved as a signal peptide. The cysteines at positions 51 and 59 are disulfide-linked. Position 104 (Trp104) interacts with substrate. Asn142 serves as a coordination point for Ca(2+). His143 serves as a coordination point for substrate. Cys171 and Cys185 are disulfide-bonded. Residues Glu183 and Asp196 each contribute to the Ca(2+) site. Residue Asn218 is glycosylated (N-linked (GlcNAc...) asparagine). Residue Arg225 participates in substrate binding. Ca(2+) is bound by residues Asp227, His231, and Glu251. Asp227 (nucleophile) is an active-site residue. Lys230 to His231 lines the substrate pocket. The active-site Proton donor is the Glu251. Gly255 serves as a coordination point for substrate. An intrachain disulfide couples Cys261 to Cys304. Arg365 is a substrate binding site. An intrachain disulfide couples Cys461 to Cys496.

The protein belongs to the glycosyl hydrolase 13 family. In terms of assembly, monomer. Ca(2+) is required as a cofactor.

The protein resides in the secreted. The catalysed reaction is Endohydrolysis of (1-&gt;4)-alpha-D-glucosidic linkages in polysaccharides containing three or more (1-&gt;4)-alpha-linked D-glucose units.. The protein is Alpha-amylase A type-3 (amy3) of Aspergillus oryzae (strain ATCC 42149 / RIB 40) (Yellow koji mold).